A 393-amino-acid chain; its full sequence is Sedoheptulose-1,7-bisphosphatase, chloroplastic (393 aa).

Cys115 and Cys120 are disulfide-bonded. Mg(2+)-binding residues include Asp126, Glu155, Asp176, Leu178, and Asp179. Substrate is bound by residues 179-182 (DGSS), Tyr290, and Lys320. Residue Glu326 coordinates Mg(2+).

The protein belongs to the FBPase class 1 family. In terms of assembly, homodimer. Requires Mg(2+) as cofactor.

The protein resides in the plastid. It is found in the chloroplast. The catalysed reaction is D-sedoheptulose 1,7-bisphosphate + H2O = D-sedoheptulose 7-phosphate + phosphate. The protein operates within carbohydrate biosynthesis; Calvin cycle. The polypeptide is Sedoheptulose-1,7-bisphosphatase, chloroplastic (Triticum aestivum (Wheat)).